Reading from the N-terminus, the 187-residue chain is High affinity copper uptake protein 1 (187 aa).

The Extracellular segment spans residues 1 to 65 (MRMNHMEMHH…SSLVINTPGE (65 aa)). Positions 9-10 (HH) match the Bis-His motif motif. N-linked (GlcNAc...) asparagine glycosylation is present at N19. The O-linked (GalNAc...) threonine glycan is linked to T30. Residues 66-86 (MAGAFVAVFLLAMFYEGLKIA) traverse the membrane as a helical segment. Residues 87 to 129 (REGLLRKSQVSIRYNSMPVPGPNGTILMETHKTVGQQMLSFPH) lie on the Cytoplasmic side of the membrane. Residue T111 is modified to Phosphothreonine. A helical transmembrane segment spans residues 130-150 (LLQTVLHIIQVVISYFLMLIF). Topologically, residues 151 to 153 (MTY) are extracellular. Residues 154–174 (NGYLCIAVAAGAGTGYFLFSW) form a helical membrane-spanning segment. Over 175–187 (KKAVVVDITEHCH) the chain is Cytoplasmic. C186 is modified (cysteine sulfenic acid (-SOH)).

It belongs to the copper transporter (Ctr) (TC 1.A.56) family. SLC31A subfamily. In terms of assembly, homotrimer; is stabilized by cisplatin via interactions between cisplatin and the methionine-rich clusters, and could be crucial for the copper(2+) reduction process and copper(1+) stabilization. Heterotrimer between SLC31A1, CCS and SOD1; this heterotrimer is copper(1+)-mediated and its maintenance is regulated through SOD1 activation. Interacts with KDR; this interaction is induced upon VEGFA stimulation leading to SLC31A1 and KDR subsequent co-internalization to early endosomes, thereby activating KDR downstream signaling in endothelial cells. Interacts (via C-terminal domain) with ATOX1 (via dimer form); this interaction improves ATOX1 stability and controls intracellular copper(1+) levels. Interacts with SLC31A2; this interaction stabilizes SLC31A2 and protects its from ubiquitination and degradation. Interacts (via C-terminal domain) with CCS; this interaction is copper(1+)-mediated. Post-translationally, O-Glycosylation at Thr-30 protects from proteolytic cleavage in the N-terminal extracellular domain. Proteolytic cleavage, leading to a truncated form, is facilitated by SLC31A2 and initiated preferentially by CTSL and to a minor extend by CTSB in endolysosomal compartments. A post-CTSL/cathepsin L processing occurs to yield to the fully truncated form. In terms of processing, sulfenylated at Cys-186 after stimulation with VEGFA, which induces SLC31A1-KDR disulfide bond formation and their co-internalization to early endosomes, driving to a sustained VEGFR2 signaling.

The protein resides in the cell membrane. The protein localises to the early endosome membrane. It localises to the recycling endosome membrane. Its subcellular location is the apical cell membrane. It is found in the late endosome membrane. The protein resides in the basolateral cell membrane. It catalyses the reaction Cu(+)(out) = Cu(+)(in). It carries out the reaction Ag(+)(out) = Ag(+)(in). Copper uptake is inhibited by cold temperature, silver and zinc ions. Platinum-containing chemotherapeutic agents uptake is inhibited by cold temperature and copper. Functionally, uniporter that mediates the transport of copper(1+) from the extracellular space to the cytoplasm, across the plasma membrane. Then, delivers directly copper(1+) to specific chaperone such as ATOX1, via a copper(1+)- mediated transient interaction between the C-terminal domain and a copper(1+) chaperone, thus controlling intracellular copper(1+) levels. May function in copper(1+) import from the apical membrane thus may drive intestinal copper absorption. The copper(1+) transport mechanism is sodium-independent, saturable and of high-affinity. Also mediates the uptake of silver(1+). May function in the influx of the platinum-containing chemotherapeutic agents. The platinum-containing chemotherapeutic agents uptake is saturable. Also participates in the first step of copper(2+) acquisition by cells through a direct transfer of copper(2+) from copper(2+) carriers in blood, such as ALB to the N-terminal domain of SLC31A1, leading to copper(2+) reduction and probably followed by copper(1+) stabilization. In addition, functions as a redox sensor to promote angiogenesis in endothelial cells, in a copper(1+) transport independent manner, by transmitting the VEGF-induced ROS signal through a sulfenylation at Cys-189 leading to a subsequent disulfide bond formation between SLC31A1 and KDR. The SLC31A1-KDR complex is then co-internalized to early endosomes, driving a sustained VEGFR2 signaling. Its function is as follows. Mobilizes copper(1+) out of the endosomal compartment, making copper(1+) available for export out of the cells. This is High affinity copper uptake protein 1 from Rattus norvegicus (Rat).